Consider the following 229-residue polypeptide: Ribonuclease HII (229 aa).

In terms of domain architecture, RNase H type-2 spans 34–223 (WPVAGADEAG…LRKTENGPET (190 aa)). A divalent metal cation contacts are provided by aspartate 40, glutamate 41, and aspartate 131. The interval 209–229 (MSFRPLRKTENGPETDELLSE) is disordered.

Belongs to the RNase HII family. Mn(2+) is required as a cofactor. Requires Mg(2+) as cofactor.

It localises to the cytoplasm. The catalysed reaction is Endonucleolytic cleavage to 5'-phosphomonoester.. Endonuclease that specifically degrades the RNA of RNA-DNA hybrids. The chain is Ribonuclease HII from Rhizobium johnstonii (strain DSM 114642 / LMG 32736 / 3841) (Rhizobium leguminosarum bv. viciae).